A 424-amino-acid chain; its full sequence is Double homeobox protein 4 (424 aa).

A compositionally biased stretch (polar residues) spans 1-10; sequence MALPTPSDST. Disordered regions lie at residues 1 to 24, 72 to 102, 218 to 362, and 388 to 414; these read MALP…RRRL, SRQL…TAVT, LQPS…LQEP, and QPLL…PLSE. 2 consecutive DNA-binding regions (homeobox) follow at residues 19–78 and 94–153; these read GRRR…LRQH and GRRK…PGQG. Over residues 265-274 the composition is skewed to basic and acidic residues; sequence KSREDRDPQR. Composition is skewed to low complexity over residues 278–302 and 319–329; these read PGPC…LAPP and AGAAWEPQAGA. The tract at residues 327–424 is required for interaction with EP300 and CREBBP, and for transcriptional activation of target genes; sequence AGAAPPPQPA…EEYRALLEEL (98 aa). Residues 405 to 424 are important for transcriptional activation of target genes; it reads AASLEAPLSEEEYRALLEEL.

This sequence belongs to the paired homeobox family. In terms of assembly, binds DNA as a monomer. Interacts (via C-terminus) with EP300 and CREBBP. As to expression, isoform 1: Does not seem to be expressed in normal muscle, but is detected in muscle of individuals with FSHD, and also in testis (at protein level). Isoform 1: Does not seem to be expressed in normal muscle, but in muscle of individuals with FSHD, where it may be toxic to cells. Isoform 2: Detected in skeletal muscle, fibroblasts and testis from healthy individuals.

Its subcellular location is the nucleus. It localises to the cytoplasm. Transcription factor that is selectively and transiently expressed in cleavage-stage embryos. Binds to double-stranded DNA elements with the consensus sequence 5'-TAATCTAATCA-3'. Binds to chromatin containing histone H3 acetylated at 'Lys-27' (H3K27ac) and promotes deacetylation of H3K27ac. In parallel, binds to chromatin that lacks histone H3 acetylation at 'Lys-27' (H3K27ac) and recruits EP300 and CREBBP to promote acetylation of histone H3 at 'Lys-27' at new sites. Involved in transcriptional regulation of numerous genes, primarily as transcriptional activator, but also mediates repression of a set of target genes. Promotes expression of ZSCAN4 and KDM4E, two proteins with essential roles during early embryogenesis. Promotes nuclear translocation of CTNNB1/beta-catenin and its subsequent activation of target genes. Heterologous expression in cultured embryonic stem cells mediates transcription of HERVL retrotransposons and transcripts derived from ACRO1 and HSATII satellite repeats. May activate expression of PITX1. May regulate microRNA (miRNA) expression. Inappropriate expression can inhibit myogenesis and promote apoptosis. Its function is as follows. Probably inactive as a transcriptional activator, due to the absence of the C-terminal region that is important for transcriptional activation. Can inhibit transcriptional activation mediated by isoform 1. Heterologous expression of isoform 2 has no deleterious effect on cell survival. The polypeptide is Double homeobox protein 4 (Homo sapiens (Human)).